The following is a 94-amino-acid chain: Small ribosomal subunit protein bS18c (94 aa).

Belongs to the bacterial ribosomal protein bS18 family. In terms of assembly, part of the 30S ribosomal subunit.

The protein resides in the plastid. Its subcellular location is the chloroplast. The sequence is that of Small ribosomal subunit protein bS18c from Manihot esculenta (Cassava).